The chain runs to 345 residues: Biotin synthase (345 aa).

The 229-residue stretch at 67 to 295 (YKVQLASLLS…KSRIRLSAGR (229 aa)) folds into the Radical SAM core domain. Residues cysteine 82, cysteine 86, and cysteine 89 each contribute to the [4Fe-4S] cluster site. 4 residues coordinate [2Fe-2S] cluster: cysteine 126, cysteine 158, cysteine 218, and arginine 290.

The protein belongs to the radical SAM superfamily. Biotin synthase family. Homodimer. It depends on [4Fe-4S] cluster as a cofactor. Requires [2Fe-2S] cluster as cofactor.

It catalyses the reaction (4R,5S)-dethiobiotin + (sulfur carrier)-SH + 2 reduced [2Fe-2S]-[ferredoxin] + 2 S-adenosyl-L-methionine = (sulfur carrier)-H + biotin + 2 5'-deoxyadenosine + 2 L-methionine + 2 oxidized [2Fe-2S]-[ferredoxin]. It participates in cofactor biosynthesis; biotin biosynthesis; biotin from 7,8-diaminononanoate: step 2/2. Its function is as follows. Catalyzes the conversion of dethiobiotin (DTB) to biotin by the insertion of a sulfur atom into dethiobiotin via a radical-based mechanism. In Prochlorococcus marinus (strain NATL1A), this protein is Biotin synthase.